Reading from the N-terminus, the 330-residue chain is Glycoprotein integral membrane protein 1 (330 aa).

Positions methionine 1–glycine 23 are cleaved as a signal peptide. At tryptophan 24–asparagine 268 the chain is on the extracellular side. Residues asparagine 46, asparagine 64, asparagine 166, and asparagine 191 are each glycosylated (N-linked (GlcNAc...) asparagine). A helical membrane pass occupies residues isoleucine 269–proline 289. Residues valine 290–isoleucine 330 lie on the Cytoplasmic side of the membrane.

The protein resides in the membrane. In Pongo abelii (Sumatran orangutan), this protein is Glycoprotein integral membrane protein 1 (GINM1).